We begin with the raw amino-acid sequence, 216 residues long: Pyridoxine/pyridoxamine 5'-phosphate oxidase (216 aa).

Residues 63–68, 78–79, Lys-85, and Gln-107 contribute to the FMN site; these read RMVLMK and YS. Lys-68 is a substrate binding site. 2 residues coordinate substrate: Tyr-125 and Arg-129. Residues 142 to 143 and Trp-187 each bind FMN; that span reads QS. 193–195 is a substrate binding site; it reads RLH. Arg-197 is an FMN binding site.

It belongs to the pyridoxamine 5'-phosphate oxidase family. In terms of assembly, homodimer. Requires FMN as cofactor.

The catalysed reaction is pyridoxamine 5'-phosphate + O2 + H2O = pyridoxal 5'-phosphate + H2O2 + NH4(+). The enzyme catalyses pyridoxine 5'-phosphate + O2 = pyridoxal 5'-phosphate + H2O2. The protein operates within cofactor metabolism; pyridoxal 5'-phosphate salvage; pyridoxal 5'-phosphate from pyridoxamine 5'-phosphate: step 1/1. Its pathway is cofactor metabolism; pyridoxal 5'-phosphate salvage; pyridoxal 5'-phosphate from pyridoxine 5'-phosphate: step 1/1. In terms of biological role, catalyzes the oxidation of either pyridoxine 5'-phosphate (PNP) or pyridoxamine 5'-phosphate (PMP) into pyridoxal 5'-phosphate (PLP). The protein is Pyridoxine/pyridoxamine 5'-phosphate oxidase of Bradyrhizobium sp. (strain ORS 278).